A 2713-amino-acid chain; its full sequence is Histone-lysine N-methyltransferase 2B (2713 aa).

The span at 1–11 (MAAAAGGGSCP) shows a compositional bias: gly residues. Disordered regions lie at residues 1-65 (MAAA…GEDT), 82-524 (RLWA…PTVV), and 542-783 (VSAR…ARVA). Alanine 2 is subject to N-acetylalanine. Positions 12–24 (GPGSARGRFPGRP) are enriched in low complexity. The Menin-binding motif (MBM) motif lies at 17 to 36 (RGRFPGRPRGSGGGGGRGGR). Gly residues-rich tracts occupy residues 25 to 38 (RGSG…GRGN) and 49 to 60 (RGGGAAGPGGAE). Residues 37-44 (GNGAERVR) constitute a DNA-binding region (a.T hook 1). Residues 109 to 123 (PEEESSDGESEEEEF) show a composition bias toward acidic residues. A DNA-binding region (a.T hook 2) is located at residues 110–117 (EEESSDGE). 3 positions are modified to phosphoserine: serine 113, serine 114, and serine 118. The span at 144-158 (QRGRAPRGRGRKHKT) shows a compositional bias: basic residues. Positions 340–360 (PQRKDGDEPERGSCRKKQEQK) are enriched in basic and acidic residues. Residues 357–365 (QEQKLEEEE) constitute a DNA-binding region (a.T hook 3). Residues 361 to 393 (LEEEEEEEEKEGEEKEEKDDNEDNNKQEEEEET) are compositionally biased toward acidic residues. A compositionally biased stretch (basic and acidic residues) spans 394-412 (ERAVAEEEAMLAKEKEEAK). Residues 414-460 (PSPPLTPPVPSPPPPLPPPSTSPPPPASPLPPPVSPPPPLSPPPYPA) are compositionally biased toward pro residues. Residues 501 to 517 (GTLSPTPNPSTTTGSPL) show a composition bias toward low complexity. The span at 555–566 (RFMDEDPPKPPK) shows a compositional bias: basic and acidic residues. The span at 577 to 605 (ATSPPAPQEPVPVSSPPRVPTPPSTPVPL) shows a compositional bias: pro residues. Residues 606-617 (PEKRRSILREPT) show a composition bias toward basic and acidic residues. The span at 627-645 (LPPPPPAPPPAPSPPPAPA) shows a compositional bias: pro residues. 3 stretches are compositionally biased toward low complexity: residues 646-657 (TPSRRPLLLRAP), 715-728 (VPVV…EVPP), and 738-756 (QQLQ…LLPQ). Residues 757–774 (ALPPQQPQAQPPPSPQHT) show a composition bias toward pro residues. Lysine 810 participates in a covalent cross-link: Glycyl lysine isopeptide (Lys-Gly) (interchain with G-Cter in SUMO2). Phosphoserine is present on residues serine 826, serine 849, and serine 866. Disordered regions lie at residues 831–872 (TEEA…QGPR) and 899–964 (SALP…HHGK). The span at 841–862 (TPDRGCVRSEDESMEAKRDRAS) shows a compositional bias: basic and acidic residues. Over residues 912–922 (EDTSSASETES) the composition is skewed to low complexity. Phosphoserine is present on serine 941. Residues 953–964 (TPRRSLPSHHGK) show a composition bias toward basic residues. Residues 964–1011 (KKMRMARCGHCRGCLRVQDCGSCVNCLDKPKFGGPNTKKQCCVYRKCD) form a CXXC-type zinc finger. Positions 971, 974, 977, 983, 986, 989, 1005, and 1010 each coordinate Zn(2+). Disordered stretches follow at residues 1032-1076 (LLPW…DSLL) and 1088-1138 (QRPS…LQPV). Residues serine 1037, serine 1040, serine 1098, and serine 1101 each carry the phosphoserine modification. Residue lysine 1142 forms a Glycyl lysine isopeptide (Lys-Gly) (interchain with G-Cter in SUMO2) linkage. 3 PHD-type zinc fingers span residues 1207 to 1258 (PMVC…CKFC), 1255 to 1309 (CKFC…CVRC), and 1341 to 1402 (GNYC…CAGA). The 101-residue stretch at 1410-1510 (ALSGALQGGL…GLLLKLLESA (101 aa)) folds into the Bromo domain. Residues 1550-1572 (RQQESETPESGQPPGDPSAAFQS) form a disordered region. The segment at 1584-1624 (PRQCALCLKYGDADSKEAGRLLYIGQNEWTHVNCAIWSAEV) adopts a C2HC pre-PHD-type zinc-finger fold. The segment at 1645–1692 (MRCELCLKPGATVGCCLSSCLSNFHFMCARASYCIFQDDKKVFCQKHT) adopts a PHD-type 4 zinc-finger fold. The FYR N-terminal domain occupies 1733–1789 (VINVLIGSIRINSLGTLSDLSDCEGRLFPIGYQCSRLYWSTVDARRRCWYRCRILEY). The span at 1808-1821 (QTIVHSPTPSSDTD) shows a compositional bias: polar residues. Disordered regions lie at residues 1808 to 1973 (QTIV…GPDF), 2056 to 2104 (QLDG…PPED), 2116 to 2160 (NLGG…RTFA), 2279 to 2356 (VSTF…RCPL), and 2382 to 2408 (YSAG…PKRV). 2 stretches are compositionally biased toward low complexity: residues 1872–1890 (PLGG…PSSL) and 1923–1933 (RRTSSPLRTSP). Residues serine 1926 and serine 1932 each carry the phosphoserine modification. Polar residues predominate over residues 1939–1950 (LSTSVTALTPTS). Acidic residues predominate over residues 2058 to 2068 (DGVDDGTDSEA). 2 positions are modified to phosphothreonine: threonine 2064 and threonine 2079. Residues 2084 to 2093 (PGVGRGGVLG) show a composition bias toward gly residues. Polar residues predominate over residues 2140–2153 (NGSQPPQSLSTSPA). Serine 2286 and serine 2346 each carry phosphoserine. The FYR C-terminal domain maps to 2409–2490 (GPHLRFEISS…QRCQHYKFRY (82 aa)). The WDR5 interaction motif (WIN) signature appears at 2506–2511 (GAARAE). Positions 2573-2689 (EAVGVYRSAI…RGEELTYDYK (117 aa)) constitute an SET domain. S-adenosyl-L-methionine-binding positions include histidine 2583, arginine 2585, tyrosine 2627, and 2650 to 2651 (NH). Residues cysteine 2653 and cysteine 2701 each coordinate Zn(2+). A Post-SET domain is found at 2697-2713 (NKLPCNCGAKRCRRFLN). An S-adenosyl-L-methionine-binding site is contributed by asparagine 2702. Zn(2+)-binding residues include cysteine 2703 and cysteine 2708.

Belongs to the class V-like SAM-binding methyltransferase superfamily. Histone-lysine methyltransferase family. TRX/MLL subfamily. In terms of assembly, component of the menin-associated histone methyltransferase complex, at least composed of KMT2B/MLL4, ASH2L, RBBP5, WDR5, DPY30, MEN1; the complex interacts with POLR2A and POLR2B via MEN1. Interacts with NFE2. Interacts with KDM6B. Interacts (via WIN motif) with WDR5. Interacts (via MBM motif) with MEN1.

It localises to the nucleus. It catalyses the reaction L-lysyl(4)-[histone H3] + S-adenosyl-L-methionine = N(6)-methyl-L-lysyl(4)-[histone H3] + S-adenosyl-L-homocysteine + H(+). The enzyme catalyses N(6)-methyl-L-lysyl(4)-[histone H3] + S-adenosyl-L-methionine = N(6),N(6)-dimethyl-L-lysyl(4)-[histone H3] + S-adenosyl-L-homocysteine + H(+). Its function is as follows. Histone methyltransferase that catalyzes methyl group transfer from S-adenosyl-L-methionine to the epsilon-amino group of 'Lys-4' of histone H3 (H3K4) via a non-processive mechanism. Part of chromatin remodeling machinery predominantly forms H3K4me1 and H3K4me2 methylation marks at active chromatin sites where transcription and DNA repair take place. Likely plays a redundant role with KMT2C in enriching H3K4me1 marks on primed and active enhancer elements. Plays a central role in beta-globin locus transcription regulation by being recruited by NFE2. Plays an important role in controlling bulk H3K4me during oocyte growth and preimplantation development. Required during the transcriptionally active period of oocyte growth for the establishment and/or maintenance of bulk H3K4 trimethylation (H3K4me3), global transcriptional silencing that preceeds resumption of meiosis, oocyte survival and normal zygotic genome activation. This chain is Histone-lysine N-methyltransferase 2B (Kmt2b), found in Mus musculus (Mouse).